Consider the following 30-residue polypeptide: Nattererin-2 (30 aa).

In terms of tissue distribution, expressed by the skin glands.

It is found in the secreted. In terms of biological role, probably has antibacterial activity. This Physalaemus nattereri (Cuyaba dwarf frog) protein is Nattererin-2.